The following is a 171-amino-acid chain: Protein-export protein SecB (171 aa).

The protein belongs to the SecB family. As to quaternary structure, homotetramer, a dimer of dimers. One homotetramer interacts with 1 SecA dimer.

The protein localises to the cytoplasm. In terms of biological role, one of the proteins required for the normal export of preproteins out of the cell cytoplasm. It is a molecular chaperone that binds to a subset of precursor proteins, maintaining them in a translocation-competent state. It also specifically binds to its receptor SecA. This Jannaschia sp. (strain CCS1) protein is Protein-export protein SecB.